A 352-amino-acid polypeptide reads, in one-letter code: UDP-N-acetylglucosamine--N-acetylmuramyl-(pentapeptide) pyrophosphoryl-undecaprenol N-acetylglucosamine transferase (352 aa).

UDP-N-acetyl-alpha-D-glucosamine contacts are provided by S195 and Q287.

It belongs to the glycosyltransferase 28 family. MurG subfamily.

It is found in the cell membrane. It catalyses the reaction Mur2Ac(oyl-L-Ala-gamma-D-Glu-L-Lys-D-Ala-D-Ala)-di-trans,octa-cis-undecaprenyl diphosphate + UDP-N-acetyl-alpha-D-glucosamine = beta-D-GlcNAc-(1-&gt;4)-Mur2Ac(oyl-L-Ala-gamma-D-Glu-L-Lys-D-Ala-D-Ala)-di-trans,octa-cis-undecaprenyl diphosphate + UDP + H(+). The protein operates within cell wall biogenesis; peptidoglycan biosynthesis. Its function is as follows. Cell wall formation. Catalyzes the transfer of a GlcNAc subunit on undecaprenyl-pyrophosphoryl-MurNAc-pentapeptide (lipid intermediate I) to form undecaprenyl-pyrophosphoryl-MurNAc-(pentapeptide)GlcNAc (lipid intermediate II). The protein is UDP-N-acetylglucosamine--N-acetylmuramyl-(pentapeptide) pyrophosphoryl-undecaprenol N-acetylglucosamine transferase of Streptococcus pneumoniae (strain Taiwan19F-14).